Reading from the N-terminus, the 636-residue chain is MAKIHELSENLTNQIAAGEVIERPASVVKELVENSLDAGATRIRVDFIDAGLKQIVVQDNGTGIARDQVDLAFTRHATSKISNEHDLFKVSTLGFRGEALASISAVSHVEIVTATENAIGIKADFSGGSKKGQEDAASQKGTKITVRDLFFNTPARLKYLRSPRTEIMKIVDIINRLSLGYPHVSFTLSNTGKVLFRTTGNGNLKQTVANVYGRHIAEKMESFEAKDSDFKITGLMSKPELTRSTRNFISILLNGRYIKNFQLNNAIMDGYGSKLAARHYPIVVITIHVDPMLVDVNVHPTKQEVRLSKEKELSRLITDAISDALLDKTEQSSGFANLENKRETLVDQLEFNLNQDVVNTTRKTPEVHEEAEKPEFLVKQEAKNSEEPKNETEHNYVDINIPREDDQYIITKTWDKNVALQQKLMPFSNKKVDQEVISTGDETLANNLPRLAYVGKIDTYLLAENDGDLYLIDQVAARRRLQFEQIYQTITSKKIVQQGLLTPIVLEFGNLDFLQIKDKIYQIKQLGIYLDEFGQNSFIVRSYPTWIHDHVEESIREILDNYLNLDKGKTQNLFKRVAALEAKRSVKGKINLSAAEGTQIITDLRKTSDPYHDADGRLILVRISQNELRKMFKKGE.

The disordered stretch occupies residues R362–E393. A compositionally biased stretch (basic and acidic residues) spans K363–E393.

This sequence belongs to the DNA mismatch repair MutL/HexB family.

This protein is involved in the repair of mismatches in DNA. It is required for dam-dependent methyl-directed DNA mismatch repair. May act as a 'molecular matchmaker', a protein that promotes the formation of a stable complex between two or more DNA-binding proteins in an ATP-dependent manner without itself being part of a final effector complex. The sequence is that of DNA mismatch repair protein MutL from Lactobacillus helveticus (strain DPC 4571).